The chain runs to 760 residues: Metal transporter cnnm-2 (760 aa).

A signal peptide spans 1 to 21 (MIIKVFLRLLLLCAHIVCIDG). At 22 to 153 (KLEIRPVVSG…ETFMPVWAQC (132 aa)) the chain is on the extracellular side. N-linked (GlcNAc...) asparagine glycosylation occurs at Asn88. A CNNM transmembrane domain is found at 145 to 323 (TFMPVWAQCA…MENDACDIDL (179 aa)). The chain crosses the membrane as a helical span at residues 154-174 (AILCLLFSISALCSGLTLGLM). The Cytoplasmic segment spans residues 175-208 (ALTPQELSILMKSGSQREKKHAAAIYPIRCHGNR). Residues 209 to 229 (LLCTVIIMNVIVNTGITLLFD) traverse the membrane as a helical segment. Asp230 is a topological domain (extracellular). Residues 231–251 (LAEGLIAFVASTVGIVVFGEI) form a helical membrane-spanning segment. Over 252–261 (LPQSICVKYG) the chain is Cytoplasmic. A helical membrane pass occupies residues 262–282 (LAVGANTIFITKFFMFLLFPI). At 283 to 760 (TWPLGKILDK…SVEELKPLME (478 aa)) the chain is on the extracellular side. Asn302 and Asn403 each carry an N-linked (GlcNAc...) asparagine glycan. CBS domains are found at residues 344–406 (MTDI…NITV) and 442–512 (MVAK…ITDE). 3 N-linked (GlcNAc...) asparagine glycosylation sites follow: Asn528, Asn592, and Asn667. Residues 708–734 (DDFGSPTRKASILDSSPNSRKRSSTSV) are disordered.

Belongs to the ACDP family.

The protein localises to the cell membrane. Functionally, probable metal transporter. Probably acts redundantly with the other metal transport proteins cnnm-1, cnnm-3, cnnm-4 and cnnm-5 to regulate Mg(2+) homeostasis. The protein is Metal transporter cnnm-2 of Caenorhabditis elegans.